A 114-amino-acid polypeptide reads, in one-letter code: Iron-sulfur cluster assembly protein CyaY (114 aa).

It belongs to the frataxin family.

Functionally, involved in iron-sulfur (Fe-S) cluster assembly. May act as a regulator of Fe-S biogenesis. This is Iron-sulfur cluster assembly protein CyaY from Ralstonia pickettii (strain 12J).